The primary structure comprises 358 residues: Alanine racemase (358 aa).

Lysine 35 functions as the Proton acceptor; specific for D-alanine in the catalytic mechanism. Lysine 35 is modified (N6-(pyridoxal phosphate)lysine). Arginine 130 contacts substrate. The active-site Proton acceptor; specific for L-alanine is tyrosine 255. Methionine 303 serves as a coordination point for substrate.

Belongs to the alanine racemase family. The cofactor is pyridoxal 5'-phosphate.

It catalyses the reaction L-alanine = D-alanine. The protein operates within amino-acid biosynthesis; D-alanine biosynthesis; D-alanine from L-alanine: step 1/1. Its function is as follows. Catalyzes the interconversion of L-alanine and D-alanine. May also act on other amino acids. The polypeptide is Alanine racemase (alr) (Shewanella baltica (strain OS185)).